The chain runs to 414 residues: Putative ankyrin repeat protein BB_B28 (414 aa).

ANK repeat units lie at residues 326 to 355 (NGNP…NINL) and 359 to 389 (NSQT…NPNI).

The chain is Putative ankyrin repeat protein BB_B28 from Borreliella burgdorferi (strain ATCC 35210 / DSM 4680 / CIP 102532 / B31) (Borrelia burgdorferi).